We begin with the raw amino-acid sequence, 297 residues long: PIH1 domain-containing protein 1 (297 aa).

It belongs to the PIH1 family.

The protein resides in the nucleus. Its function is as follows. Involved in the assembly of C/D box small nucleolar ribonucleoprotein (snoRNP) particles. Recruits the SWI/SNF complex to the core promoter of rRNA genes and enhances pre-rRNA transcription. Mediates interaction of TELO2 with the R2TP complex which is necessary for the stability of MTOR and SMG1. Positively regulates the assembly and activity of the mTORC1 complex. This Xenopus laevis (African clawed frog) protein is PIH1 domain-containing protein 1 (pih1d1).